Reading from the N-terminus, the 801-residue chain is MHHRMNEMNLSPVGMEQLTSSSVSNALPVSGSHLGLAASPTHSAIPAPGLPVAIPNLGPSLSSLPSALSLMLPMGIGDRGVMCGLPERNYTLPPPPYPHLESSYFRTILPGILSYLADRPPPQYIHPNSINVDGNTALSITNNPSALDPYQSNGNVGLEPGIVSIDSRSVNTHGAQSLHPSDGHEVALDTAITMENVSRVTSPISTDGMAEELTMDGVAGEHSQIPNGSRSHEPLSVDSVSNNLAADAVGHGGVIPMHGNGLELPVVMETDHIASRVNGMSDSALSDSIHTVAMSTNSVSVALSTSHNLASLESVSLHEVGLSLEPVAVSSITQEVAMGTGHVDVSSDSLSFVSPSLQMEDSNSNKENMATLFTIWCTLCDRAYPSDCPEHGPVTFVPDTPIESRARLSLPKQLVLRQSIVGAEVGVWTGETIPVRTCFGPLIGQQSHSMEVAEWTDKAVNHIWKIYHNGVLEFCIITTDENECNWMMFVRKARNREEQNLVAYPHDGKIFFCTSQDIPPENELLFYYSRDYAQQIGVPEHPDVHLCNCGKECNSYTEFKAHLTSHIHNHLPTQGHSGSHGPSHSKERKWKCSMCPQAFISPSKLHVHFMGHMGMKPHKCDFCSKAFSDPSNLRTHLKIHTGQKNYRCTLCDKSFTQKAHLESHMVIHTGEKNLKCDYCDKLFMRRQDLKQHVLIHTQERQIKCPKCDKLFLRTNHLKKHLNSHEGKRDYVCEKCTKAYLTKYHLTRHLKTCKGPTSSSSAPEEEEEDDSEEEDLADSVGTEDCRINSAVYSADESLSAHK.

An SET domain is found at 412 to 529 (KQLVLRQSIV…PENELLFYYS (118 aa)). The C2H2-type 1; atypical zinc finger occupies 545–566 (HLCNCGKECNSYTEFKAHLTSH). 4 C2H2-type zinc fingers span residues 618–640 (HKCDFCSKAFSDPSNLRTHLKIH), 646–668 (YRCTLCDKSFTQKAHLESHMVIH), 674–696 (LKCDYCDKLFMRRQDLKQHVLIH), and 702–724 (IKCPKCDKLFLRTNHLKKHLNSH). The segment at 730 to 752 (YVCEKCTKAYLTKYHLTRHLKTC) adopts a C2H2-type 6; atypical zinc-finger fold. The disordered stretch occupies residues 751-782 (TCKGPTSSSSAPEEEEEDDSEEEDLADSVGTE). A compositionally biased stretch (acidic residues) spans 762–776 (PEEEEEDDSEEEDLA).

It belongs to the class V-like SAM-binding methyltransferase superfamily. Expressed in many tissues. Highly expressed in ovary, testis, pancreas, brain, heart and prostate.

The protein resides in the nucleus. May function as a transcription factor involved in cell differentiation. The sequence is that of PR domain zinc finger protein 4 (PRDM4) from Homo sapiens (Human).